A 204-amino-acid polypeptide reads, in one-letter code: Lysozyme g (204 aa).

An N-terminal signal peptide occupies residues 1–19 (MHLMLVLLGLAALLGTSQS). 2 disulfides stabilise this stretch: Cys-23–Cys-79 and Cys-37–Cys-48. Catalysis depends on residues Glu-92 and Asp-105.

This sequence belongs to the glycosyl hydrolase 23 family.

The protein localises to the secreted. It carries out the reaction Hydrolysis of (1-&gt;4)-beta-linkages between N-acetylmuramic acid and N-acetyl-D-glucosamine residues in a peptidoglycan and between N-acetyl-D-glucosamine residues in chitodextrins.. Has bacteriolytic activity against M.luteus. The polypeptide is Lysozyme g (Struthio camelus (Common ostrich)).